Reading from the N-terminus, the 275-residue chain is Large ribosomal subunit protein uL2 (275 aa).

The interval A208 to K275 is disordered. 2 stretches are compositionally biased toward basic residues: residues G209 to T219 and K254 to R263.

Belongs to the universal ribosomal protein uL2 family. As to quaternary structure, part of the 50S ribosomal subunit. Forms a bridge to the 30S subunit in the 70S ribosome.

Its function is as follows. One of the primary rRNA binding proteins. Required for association of the 30S and 50S subunits to form the 70S ribosome, for tRNA binding and peptide bond formation. It has been suggested to have peptidyltransferase activity; this is somewhat controversial. Makes several contacts with the 16S rRNA in the 70S ribosome. This is Large ribosomal subunit protein uL2 from Coxiella burnetii (strain CbuK_Q154) (Coxiella burnetii (strain Q154)).